A 279-amino-acid polypeptide reads, in one-letter code: DegV domain-containing protein CA_C0701 (279 aa).

One can recognise a DegV domain in the interval 4–277 (IKIVTDSTCD…TKACGVFFIE (274 aa)). Residues T62 and S94 each coordinate hexadecanoate.

May bind long-chain fatty acids, such as palmitate, and may play a role in lipid transport or fatty acid metabolism. The chain is DegV domain-containing protein CA_C0701 from Clostridium acetobutylicum (strain ATCC 824 / DSM 792 / JCM 1419 / IAM 19013 / LMG 5710 / NBRC 13948 / NRRL B-527 / VKM B-1787 / 2291 / W).